Reading from the N-terminus, the 506-residue chain is Vinckepain-1 (506 aa).

Residues 1–32 (MSDNIGQINFTIPGIQSLDENDTYLKINHKKT) lie on the Cytoplasmic side of the membrane. A propeptide spans 1–262 (MSDNIGQINF…LISVDNKSKD (262 aa)) (activation peptide). A helical; Signal-anchor for type II membrane protein transmembrane segment spans residues 33–53 (IKICAYAITAIALFFIGGVFF). Over 54–506 (KNQAKINALD…VGSDVFFPIY (453 aa)) the chain is Lumenal. Asn133 and Asn258 each carry an N-linked (GlcNAc...) asparagine glycan. Cystine bridges form between Cys284/Cys326, Cys319/Cys359, Cys344/Cys364, and Cys413/Cys495. Residue Cys287 is part of the active site. N-linked (GlcNAc...) asparagine glycosylation is present at Asn418. Active-site residues include His419 and Asn470.

The protein belongs to the peptidase C1 family.

Its subcellular location is the membrane. In terms of biological role, cysteine protease. This Plasmodium vinckei protein is Vinckepain-1.